We begin with the raw amino-acid sequence, 63 residues long: Large ribosomal subunit protein uL29 (63 aa).

This sequence belongs to the universal ribosomal protein uL29 family.

The polypeptide is Large ribosomal subunit protein uL29 (Tolumonas auensis (strain DSM 9187 / NBRC 110442 / TA 4)).